The primary structure comprises 279 residues: Diaminopimelate epimerase (279 aa).

The substrate site is built by Asn-11 and Asn-72. Cys-81 serves as the catalytic Proton donor. Substrate is bound by residues 82-83, Asn-187, and 205-206; these read GN and ER. Cys-215 acts as the Proton acceptor in catalysis. 216–217 contacts substrate; it reads GT.

The protein belongs to the diaminopimelate epimerase family. Homodimer.

The protein resides in the cytoplasm. It catalyses the reaction (2S,6S)-2,6-diaminopimelate = meso-2,6-diaminopimelate. The protein operates within amino-acid biosynthesis; L-lysine biosynthesis via DAP pathway; DL-2,6-diaminopimelate from LL-2,6-diaminopimelate: step 1/1. Catalyzes the stereoinversion of LL-2,6-diaminopimelate (L,L-DAP) to meso-diaminopimelate (meso-DAP), a precursor of L-lysine and an essential component of the bacterial peptidoglycan. The chain is Diaminopimelate epimerase from Aquifex aeolicus (strain VF5).